The sequence spans 434 residues: MRVLVLGSGVIGTTSAWYLRQAGFEVTVIDRQPGPALETSFANAGQLSFGYTSPWAAPGVPKKAIGWLFEKHAPLAIKPGMDLAQYRWLWQMLRNCTHERYAINKARMVRMSEYSRDCLNELRAQIGIEFEGRDLGTTQLFRTQQQLDASAQDIEILAQYGVPYEVLDRAGIIQAEPALAHVDGLVGALRLPRDQTGDCQLFTRRLAQMCVDAGVEFRFDQDITGLVSDGERITGVHVNGTLETADRFVVALGSYSPALVAPLGMRLPVYPLKGYSLTLPITDPAMAPTSTILDESYKVAVTRFDDRIRVGGMAEVAGFDLSLSQRRRETLELVVSDLYPKGGDLSRAQFWTGLRPATPDGTPVIGATPFRNLYLNTGHGTLGWTMACGSGRYLADLMSARQPQISTEGLDVFRYGQYGHAPQHENRTCVLPAR.

3 to 17 provides a ligand contact to FAD; it reads VLVLGSGVIGTTSAW.

It belongs to the DadA oxidoreductase family. FAD serves as cofactor.

The enzyme catalyses a D-alpha-amino acid + A + H2O = a 2-oxocarboxylate + AH2 + NH4(+). It functions in the pathway amino-acid degradation; D-alanine degradation; NH(3) and pyruvate from D-alanine: step 1/1. In terms of biological role, oxidative deamination of D-amino acids. The polypeptide is D-amino acid dehydrogenase (Stenotrophomonas maltophilia (strain R551-3)).